The primary structure comprises 591 residues: BRCA1-associated protein (591 aa).

Residue S52 is modified to Phosphoserine. The span at 82-93 (DEVRDTVEEKKP) shows a compositional bias: basic and acidic residues. The interval 82–124 (DEVRDTVEEKKPSAAPVSAQRSREQSESVNTAPESPSKQLPDQ) is disordered. Residues 108–124 (ESVNTAPESPSKQLPDQ) show a composition bias toward polar residues. S116 and S118 each carry phosphoserine. An RING-type zinc finger spans residues 263 to 303 (CTVCLERMDESVNGILTTLCNHSFHSQCLQRWDDTTCPVCR). The UBP-type; degenerate zinc finger occupies 300–392 (PVCRYCQTPE…GKIVQYECEG (93 aa)). 8 residues coordinate Zn(2+): C316, C319, C328, C331, C336, H343, H347, and H353. A coiled-coil region spans residues 430–536 (EKDTAEEINN…EIQEQLRDVM (107 aa)). The interval 563–591 (IAMASAPNPPSSGAGGKLQSRKGRSKRGK) is disordered. Positions 581–591 (QSRKGRSKRGK) are enriched in basic residues.

As to quaternary structure, interacts with the nuclear localization signal of BRCA1 and with the N-terminal of KSR1. The C-terminal portion of BRCA1 interacts with DDB1. Isoform 2 is highly expressed in testis, lower levels in brain, heart, lung, stomach, colon, uterus, liver and kidney. Isoform 1 is only expressed in the testis. Isoform 2 is predominant over isoform 1 in both fetal and adult testis.

Its subcellular location is the cytoplasm. It carries out the reaction S-ubiquitinyl-[E2 ubiquitin-conjugating enzyme]-L-cysteine + [acceptor protein]-L-lysine = [E2 ubiquitin-conjugating enzyme]-L-cysteine + N(6)-ubiquitinyl-[acceptor protein]-L-lysine.. It functions in the pathway protein modification; protein ubiquitination. Negatively regulates MAP kinase activation by limiting the formation of Raf/MEK complexes probably by inactivation of the KSR1 scaffold protein. Also acts as a Ras responsive E3 ubiquitin ligase that, on activation of Ras, is modified by auto-polyubiquitination resulting in the release of inhibition of Raf/MEK complex formation. May also act as a cytoplasmic retention protein with a role in regulating nuclear transport. This Mus musculus (Mouse) protein is BRCA1-associated protein.